A 302-amino-acid polypeptide reads, in one-letter code: Sulfate adenylyltransferase subunit 2 (302 aa).

Residues 280-302 (RQGRLIDSDQSASMEQKKRQGYF) are disordered.

This sequence belongs to the PAPS reductase family. CysD subfamily. Heterodimer composed of CysD, the smaller subunit, and CysN.

The catalysed reaction is sulfate + ATP + H(+) = adenosine 5'-phosphosulfate + diphosphate. It participates in sulfur metabolism; hydrogen sulfide biosynthesis; sulfite from sulfate: step 1/3. With CysN forms the ATP sulfurylase (ATPS) that catalyzes the adenylation of sulfate producing adenosine 5'-phosphosulfate (APS) and diphosphate, the first enzymatic step in sulfur assimilation pathway. APS synthesis involves the formation of a high-energy phosphoric-sulfuric acid anhydride bond driven by GTP hydrolysis by CysN coupled to ATP hydrolysis by CysD. The chain is Sulfate adenylyltransferase subunit 2 from Shewanella oneidensis (strain ATCC 700550 / JCM 31522 / CIP 106686 / LMG 19005 / NCIMB 14063 / MR-1).